Consider the following 495-residue polypeptide: Ectonucleoside triphosphate diphosphohydrolase 2 (495 aa).

At 1 to 7 the chain is on the cytoplasmic side; it reads MAGKVRS. The helical transmembrane segment at 8–28 threads the bilayer; the sequence is LLPPLLLAAAGLAGLLLLCVP. The Extracellular portion of the chain corresponds to 29–462; sequence TRDVREPPAL…PGLRKGTDFS (434 aa). The N-linked (GlcNAc...) asparagine glycan is linked to asparagine 64. Cysteine 75 and cysteine 99 form a disulfide bridge. Residue asparagine 129 is glycosylated (N-linked (GlcNAc...) asparagine). Glutamate 165 functions as the Proton acceptor in the catalytic mechanism. 204 to 208 contacts ATP; that stretch reads GASTQ. 4 cysteine pairs are disulfide-bonded: cysteine 242/cysteine 284, cysteine 265/cysteine 310, cysteine 323/cysteine 328, and cysteine 377/cysteine 399. Asparagine 294 carries an N-linked (GlcNAc...) asparagine glycan. Residues asparagine 378 and asparagine 443 are each glycosylated (N-linked (GlcNAc...) asparagine). A helical transmembrane segment spans residues 463–483; that stretch reads SWVVLLLLFASALLAALVLLL. The Cytoplasmic segment spans residues 484-495; the sequence is RQVHSAKLPSTI.

The protein belongs to the GDA1/CD39 NTPase family. The cofactor is Ca(2+). It depends on Mg(2+) as a cofactor. In terms of tissue distribution, brain, placenta, skeletal muscle, kidney, pancreas, heart, ovary, testis, colon, small intestine, prostate and pancreas. No expression in adult thymus, spleen, lung, liver and peripheral blood leukocytes.

It localises to the cell membrane. Its subcellular location is the endoplasmic reticulum membrane. In the nervous system, could hydrolyze ATP and other nucleotides to regulate purinergic neurotransmission. Hydrolyzes ADP only to a marginal extent. The order of activity with different substrates is ATP &gt; GTP &gt; CTP = ITP &gt; UTP &gt;&gt; ADP = UDP. This chain is Ectonucleoside triphosphate diphosphohydrolase 2 (ENTPD2), found in Homo sapiens (Human).